Consider the following 425-residue polypeptide: Serine/threonine transporter SstT (425 aa).

A run of 9 helical transmembrane segments spans residues F11–A31, F43–L63, L91–V111, A141–L161, I182–I202, L216–V236, I290–L310, L316–A336, and V363–T383.

It belongs to the dicarboxylate/amino acid:cation symporter (DAACS) (TC 2.A.23) family.

The protein localises to the cell inner membrane. The catalysed reaction is L-serine(in) + Na(+)(in) = L-serine(out) + Na(+)(out). It catalyses the reaction L-threonine(in) + Na(+)(in) = L-threonine(out) + Na(+)(out). Functionally, involved in the import of serine and threonine into the cell, with the concomitant import of sodium (symport system). In Psychromonas ingrahamii (strain DSM 17664 / CCUG 51855 / 37), this protein is Serine/threonine transporter SstT.